The following is a 381-amino-acid chain: Erythronate-4-phosphate dehydrogenase (381 aa).

Substrate is bound by residues Ser45 and Thr67. Residues 127-128, Asp147, and Thr176 each bind NAD(+); that span reads QV. The active site involves Arg209. Position 233 (Asp233) interacts with NAD(+). Glu238 is an active-site residue. His255 acts as the Proton donor in catalysis. Residue Gly258 participates in NAD(+) binding. A substrate-binding site is contributed by Tyr259.

This sequence belongs to the D-isomer specific 2-hydroxyacid dehydrogenase family. PdxB subfamily. In terms of assembly, homodimer.

The protein resides in the cytoplasm. It catalyses the reaction 4-phospho-D-erythronate + NAD(+) = (R)-3-hydroxy-2-oxo-4-phosphooxybutanoate + NADH + H(+). It participates in cofactor biosynthesis; pyridoxine 5'-phosphate biosynthesis; pyridoxine 5'-phosphate from D-erythrose 4-phosphate: step 2/5. Functionally, catalyzes the oxidation of erythronate-4-phosphate to 3-hydroxy-2-oxo-4-phosphonooxybutanoate. The sequence is that of Erythronate-4-phosphate dehydrogenase from Vibrio cholerae serotype O1 (strain ATCC 39315 / El Tor Inaba N16961).